We begin with the raw amino-acid sequence, 128 residues long: MSTEDLYQEDVEMLDDYEDPSTEQHWSEEDGEPSGYATAEPDDHAAQEEQDEPPALDSLALDLTLRCGELRLTLAELRRLDAGTILEVTGISPGHATLCHGEQVVAEGELVDVEGRLGLQITRLVTRS.

Residues 1-21 (MSTEDLYQEDVEMLDDYEDPS) show a composition bias toward acidic residues. The tract at residues 1–57 (MSTEDLYQEDVEMLDDYEDPSTEQHWSEEDGEPSGYATAEPDDHAAQEEQDEPPALD) is disordered. The interval 50–128 (QDEPPALDSL…LQITRLVTRS (79 aa)) is hrcQb-C. Positions 78–81 (RRLD) are dimer-dimer interface.

This sequence belongs to the FliN/MopA/SpaO family. Homotetramer. The four monomers assemble into two tightly bound homodimers. Interacts with HrcQa.

Its subcellular location is the cytoplasm. Functionally, component of the type III secretion system, which is required for effector protein delivery, parasitism, and pathogenicity. Probably participates in the formation of a C-ring-like assembly along with HrcQa. This Pseudomonas savastanoi pv. phaseolicola (Pseudomonas syringae pv. phaseolicola) protein is Type III secretion protein HrcQb (hrcQb).